The chain runs to 370 residues: 4-hydroxy-3-methylbut-2-en-1-yl diphosphate synthase (flavodoxin) (370 aa).

The [4Fe-4S] cluster site is built by Cys268, Cys271, Cys303, and Glu310.

This sequence belongs to the IspG family. It depends on [4Fe-4S] cluster as a cofactor.

The catalysed reaction is (2E)-4-hydroxy-3-methylbut-2-enyl diphosphate + oxidized [flavodoxin] + H2O + 2 H(+) = 2-C-methyl-D-erythritol 2,4-cyclic diphosphate + reduced [flavodoxin]. Its pathway is isoprenoid biosynthesis; isopentenyl diphosphate biosynthesis via DXP pathway; isopentenyl diphosphate from 1-deoxy-D-xylulose 5-phosphate: step 5/6. Converts 2C-methyl-D-erythritol 2,4-cyclodiphosphate (ME-2,4cPP) into 1-hydroxy-2-methyl-2-(E)-butenyl 4-diphosphate. This is 4-hydroxy-3-methylbut-2-en-1-yl diphosphate synthase (flavodoxin) from Bacillus cereus (strain AH187).